A 344-amino-acid chain; its full sequence is 2,3,4,5-tetrahydropyridine-2,6-dicarboxylate N-succinyltransferase (344 aa).

Residue glutamate 205 participates in Mg(2+) binding. Residue glutamate 221 is the Acyl-anhydride intermediate of the active site. Succinyl-CoA is bound by residues arginine 223, glycine 238, serine 241, alanine 264, 279–280 (EA), 287–289 (GTK), lysine 304, and 317–320 (RRNS).

This sequence belongs to the type 2 tetrahydrodipicolinate N-succinyltransferase family. Homotrimer. It depends on Magnesium ions are not essential for catalysis. as a cofactor.

Its subcellular location is the cytoplasm. It carries out the reaction (S)-2,3,4,5-tetrahydrodipicolinate + succinyl-CoA + H2O = (S)-2-succinylamino-6-oxoheptanedioate + CoA. Its pathway is amino-acid biosynthesis; L-lysine biosynthesis via DAP pathway; LL-2,6-diaminopimelate from (S)-tetrahydrodipicolinate (succinylase route): step 1/3. With respect to regulation, weakly inhibited by D-2-aminopimelate. Catalyzes the conversion of the cyclic tetrahydrodipicolinate (THDP) into the acyclic N-succinyl-L-2-amino-6-oxopimelate using succinyl-CoA. Displays succinyl transferase activity with L-2-aminopimelate and succinyl-CoA as substrates. The chain is 2,3,4,5-tetrahydropyridine-2,6-dicarboxylate N-succinyltransferase from Pseudomonas aeruginosa (strain ATCC 15692 / DSM 22644 / CIP 104116 / JCM 14847 / LMG 12228 / 1C / PRS 101 / PAO1).